A 285-amino-acid polypeptide reads, in one-letter code: Protease HtpX homolog (285 aa).

Helical transmembrane passes span 7-27 and 30-50; these read TAML…MIGG and GMTI…WFSD. H131 provides a ligand contact to Zn(2+). E132 is a catalytic residue. H135 contributes to the Zn(2+) binding site. Transmembrane regions (helical) follow at residues 146-166 and 177-197; these read ITAT…FFGG and IAGI…QMAI. A Zn(2+)-binding site is contributed by E202.

The protein belongs to the peptidase M48B family. The cofactor is Zn(2+).

It is found in the cell inner membrane. This is Protease HtpX homolog from Burkholderia multivorans (strain ATCC 17616 / 249).